The chain runs to 214 residues: Ribosomal RNA large subunit methyltransferase E (214 aa).

Gly-60, Trp-62, Asp-86, Asp-102, and Asp-127 together coordinate S-adenosyl-L-methionine. Residue Lys-167 is the Proton acceptor of the active site.

The protein belongs to the class I-like SAM-binding methyltransferase superfamily. RNA methyltransferase RlmE family.

The protein localises to the cytoplasm. It catalyses the reaction uridine(2552) in 23S rRNA + S-adenosyl-L-methionine = 2'-O-methyluridine(2552) in 23S rRNA + S-adenosyl-L-homocysteine + H(+). Its function is as follows. Specifically methylates the uridine in position 2552 of 23S rRNA at the 2'-O position of the ribose in the fully assembled 50S ribosomal subunit. This chain is Ribosomal RNA large subunit methyltransferase E, found in Herminiimonas arsenicoxydans.